The sequence spans 358 residues: Heat-inducible transcription repressor HrcA (358 aa).

Belongs to the HrcA family.

In terms of biological role, negative regulator of class I heat shock genes (grpE-dnaK-dnaJ and groELS operons). Prevents heat-shock induction of these operons. This Caulobacter vibrioides (strain ATCC 19089 / CIP 103742 / CB 15) (Caulobacter crescentus) protein is Heat-inducible transcription repressor HrcA.